Here is a 401-residue protein sequence, read N- to C-terminus: Large ribosomal subunit protein uL3 (401 aa).

Positions 1–21 (MSHRKFSAPRHGHMGFTPKKR) are disordered.

Belongs to the universal ribosomal protein uL3 family.

It is found in the cytoplasm. The L3 protein is a component of the large subunit of cytoplasmic ribosomes. This chain is Large ribosomal subunit protein uL3 (rpl-3), found in Caenorhabditis briggsae.